Here is a 141-residue protein sequence, read N- to C-terminus: ATP synthase epsilon chain (141 aa).

The protein belongs to the ATPase epsilon chain family. In terms of assembly, F-type ATPases have 2 components, CF(1) - the catalytic core - and CF(0) - the membrane proton channel. CF(1) has five subunits: alpha(3), beta(3), gamma(1), delta(1), epsilon(1). CF(0) has three main subunits: a, b and c.

It is found in the cell inner membrane. Functionally, produces ATP from ADP in the presence of a proton gradient across the membrane. The polypeptide is ATP synthase epsilon chain (Paraburkholderia phytofirmans (strain DSM 17436 / LMG 22146 / PsJN) (Burkholderia phytofirmans)).